A 490-amino-acid polypeptide reads, in one-letter code: Sulfate adenylyltransferase (490 aa).

The N-terminal stretch occupies residues 1 to 165; it reads MTKALLKDLN…LQAVTPIRHF (165 aa). Residues 166 to 390 are catalytic; sequence DFVEYRYSPA…LRQSYPPKYS (225 aa). Q193 contributes to the sulfate binding site. ATP-binding positions include 193–196 and 287–290; these read QTRN and GRDH. Catalysis depends on residues T194, R195, and N196. R195 contributes to the sulfate binding site. A291 is a binding site for sulfate. Position 329 (M329) interacts with ATP. T356 carries the phosphothreonine modification. Positions 391–490 are required for oligomerization; adenylyl-sulfate kinase-like; that stretch reads QGFVLAVPAT…LSQLSDEGYL (100 aa).

The protein belongs to the sulfate adenylyltransferase family. In terms of assembly, homohexamer. Dimer of trimers.

The protein resides in the cytoplasm. It catalyses the reaction sulfate + ATP + H(+) = adenosine 5'-phosphosulfate + diphosphate. Its pathway is sulfur metabolism; hydrogen sulfide biosynthesis; sulfite from sulfate: step 1/3. In terms of biological role, catalyzes the first intracellular reaction of sulfate assimilation, forming adenosine-5'-phosphosulfate (APS) from inorganic sulfate and ATP. Plays an important role in sulfate activation as a component of the biosynthesis pathway of sulfur-containing amino acids. The chain is Sulfate adenylyltransferase (sua1) from Schizosaccharomyces pombe (strain 972 / ATCC 24843) (Fission yeast).